Reading from the N-terminus, the 298-residue chain is Probable endonuclease 4 (298 aa).

H69, H111, E146, D180, H183, H215, D228, H230, and E260 together coordinate Zn(2+).

This sequence belongs to the AP endonuclease 2 family. It depends on Zn(2+) as a cofactor.

The enzyme catalyses Endonucleolytic cleavage to 5'-phosphooligonucleotide end-products.. Functionally, endonuclease IV plays a role in DNA repair. It cleaves phosphodiester bonds at apurinic or apyrimidinic (AP) sites, generating a 3'-hydroxyl group and a 5'-terminal sugar phosphate. In Bacillus cytotoxicus (strain DSM 22905 / CIP 110041 / 391-98 / NVH 391-98), this protein is Probable endonuclease 4.